Reading from the N-terminus, the 316-residue chain is D-alanine--D-alanine ligase (316 aa).

Positions 109–304 constitute an ATP-grasp domain; it reads KRLWRGMDLP…FDEMVLQILA (196 aa). 135-190 contributes to the ATP binding site; sequence AADLGLPLIVKPAREGSSLGMMKVESIEALQSAYREAVIFDTAVFAERWLPGAEYT. Aspartate 258, glutamate 271, and asparagine 273 together coordinate Mg(2+).

The protein belongs to the D-alanine--D-alanine ligase family. Requires Mg(2+) as cofactor. Mn(2+) is required as a cofactor.

It is found in the cytoplasm. The enzyme catalyses 2 D-alanine + ATP = D-alanyl-D-alanine + ADP + phosphate + H(+). It functions in the pathway cell wall biogenesis; peptidoglycan biosynthesis. In terms of biological role, cell wall formation. In Nitrosococcus oceani (strain ATCC 19707 / BCRC 17464 / JCM 30415 / NCIMB 11848 / C-107), this protein is D-alanine--D-alanine ligase.